The sequence spans 208 residues: FMN-dependent NADH:quinone oxidoreductase 1 (208 aa).

This sequence belongs to the azoreductase type 1 family. In terms of assembly, homodimer. FMN is required as a cofactor.

The catalysed reaction is 2 a quinone + NADH + H(+) = 2 a 1,4-benzosemiquinone + NAD(+). It carries out the reaction N,N-dimethyl-1,4-phenylenediamine + anthranilate + 2 NAD(+) = 2-(4-dimethylaminophenyl)diazenylbenzoate + 2 NADH + 2 H(+). Quinone reductase that provides resistance to thiol-specific stress caused by electrophilic quinones. Functionally, also exhibits azoreductase activity. Catalyzes the reductive cleavage of the azo bond in aromatic azo compounds to the corresponding amines. This chain is FMN-dependent NADH:quinone oxidoreductase 1, found in Bacillus thuringiensis subsp. konkukian (strain 97-27).